The following is a 275-amino-acid chain: Transmembrane protein 202 (275 aa).

Helical transmembrane passes span 60-80, 116-136, 151-171, and 193-213; these read SGFS…QFLV, ALFL…LSSC, VSML…LFLA, and WCSE…FITF.

Its subcellular location is the membrane. The sequence is that of Transmembrane protein 202 (Tmem202) from Mus musculus (Mouse).